The sequence spans 484 residues: MQGFISQVLGPVVDVEFKDYLPQINEAIVVNYELEGKECKLVLEVAAHLGDNKVRTIAMDMTDGLVRGLTAVATGNPISVPVGEKVLGRIFNVTGDLIDEGEEINFDKHWSIHRDPPPFEEQSTKSEIFETGIKVVDLLAPYAKGGKVGLFGGAGVGKTVIIMELIHNVAFKHSGYSVFAGVGERTREGNDLYNEMKESNVLDKVALCYGQMNEPPGARNRIALTGLTMAEYFRDEMGLDVLMFIDNIFRFSQSGSEMSALLGRIPSAVGYQPTLASEMGKFQERITSTKKGSITSVQAVYVPADDLTDPAPATVFAHLDATTVLNRSIAEKGIYPAVDPLDSTSRMLDPQIIGEEHYKVARGVQSVLQKYKDLQDIIAILGMDELSEEDKLIVERARKIEKFLSQPFFVAEVFTGSPGKYISLEDTIAGFKGILEGKYDDLPENAFYMVGNIDEAIAKAETLKEVSRKDVCLDNCKVDKAKKG.

152 to 159 provides a ligand contact to ATP; the sequence is GGAGVGKT.

It belongs to the ATPase alpha/beta chains family. F-type ATPases have 2 components, CF(1) - the catalytic core - and CF(0) - the membrane proton channel. CF(1) has five subunits: alpha(3), beta(3), gamma(1), delta(1), epsilon(1). CF(0) has three main subunits: a(1), b(2) and c(9-12). The alpha and beta chains form an alternating ring which encloses part of the gamma chain. CF(1) is attached to CF(0) by a central stalk formed by the gamma and epsilon chains, while a peripheral stalk is formed by the delta and b chains.

It is found in the cell inner membrane. The enzyme catalyses ATP + H2O + 4 H(+)(in) = ADP + phosphate + 5 H(+)(out). Functionally, produces ATP from ADP in the presence of a proton gradient across the membrane. The catalytic sites are hosted primarily by the beta subunits. This is ATP synthase subunit beta from Campylobacter lari (strain RM2100 / D67 / ATCC BAA-1060).